A 119-amino-acid polypeptide reads, in one-letter code: Large ribosomal subunit protein bL20 (119 aa).

It belongs to the bacterial ribosomal protein bL20 family.

Binds directly to 23S ribosomal RNA and is necessary for the in vitro assembly process of the 50S ribosomal subunit. It is not involved in the protein synthesizing functions of that subunit. This is Large ribosomal subunit protein bL20 from Nitrosomonas europaea (strain ATCC 19718 / CIP 103999 / KCTC 2705 / NBRC 14298).